A 124-amino-acid polypeptide reads, in one-letter code: Small ribosomal subunit protein uS12 (124 aa).

Residue D89 is modified to 3-methylthioaspartic acid. K108 carries the N6-acetyllysine modification.

The protein belongs to the universal ribosomal protein uS12 family. As to quaternary structure, part of the 30S ribosomal subunit. Contacts proteins S8 and S17. May interact with IF1 in the 30S initiation complex.

In terms of biological role, with S4 and S5 plays an important role in translational accuracy. Interacts with and stabilizes bases of the 16S rRNA that are involved in tRNA selection in the A site and with the mRNA backbone. Located at the interface of the 30S and 50S subunits, it traverses the body of the 30S subunit contacting proteins on the other side and probably holding the rRNA structure together. The combined cluster of proteins S8, S12 and S17 appears to hold together the shoulder and platform of the 30S subunit. This Escherichia coli (strain K12 / MC4100 / BW2952) protein is Small ribosomal subunit protein uS12.